A 775-amino-acid chain; its full sequence is Acylamino-acid-releasing enzyme 1 (775 aa).

Active-site charge relay system residues include S627, D718, and H750.

Belongs to the peptidase S9C family. Homotetramer.

Its subcellular location is the cytoplasm. It carries out the reaction Cleavage of an N-acetyl or N-formyl amino acid from the N-terminus of a polypeptide.. Catalyzes the hydrolysis of the N-terminal peptide bond of an N-acetylated peptide to generate an N-acetylated amino acid and a peptide with a free N-terminus. The polypeptide is Acylamino-acid-releasing enzyme 1 (Oryza sativa subsp. japonica (Rice)).